The chain runs to 273 residues: Chlorophyll a-b binding protein 8, chloroplastic (273 aa).

The N-terminal 32 residues, 1–32 (MATQALISSSSISTSAEAARQIIGSRISQSVT), are a transit peptide targeting the chloroplast. Arg33 is subject to N2-acetylarginine. Chlorophyll b is bound at residue Trp56. The chlorophyll a site is built by Phe76, Ser82, and Glu100. Position 105 (Arg105) interacts with chlorophyll b. Residues 106–126 (FAMLGAAGAIAPEILGKAGLI) traverse the membrane as a helical segment. Residues Ile140, Glu167, and Arg170 each coordinate chlorophyll b. The chlorophyll a site is built by Lys224, Glu225, Asn228, Arg230, Gln242, and His257. A helical transmembrane segment spans residues 231 to 251 (LAMLAILGYFIQALVTGVGPY).

This sequence belongs to the light-harvesting chlorophyll a/b-binding (LHC) protein family. The LHC complex consists of chlorophyll a-b binding proteins. It depends on Binds at least 14 chlorophylls (8 Chl-a and 6 Chl-b) and carotenoids such as lutein and neoxanthin. as a cofactor. Post-translationally, photoregulated by reversible phosphorylation of its threonine residues.

It is found in the plastid. The protein localises to the chloroplast thylakoid membrane. The light-harvesting complex (LHC) functions as a light receptor, it captures and delivers excitation energy to photosystems with which it is closely associated. The chain is Chlorophyll a-b binding protein 8, chloroplastic (CAB8) from Solanum lycopersicum (Tomato).